Here is a 907-residue protein sequence, read N- to C-terminus: TBC1 domain family member 30 (907 aa).

Positions 51–74 (ASETQDNGNKSGGDEIDVSLCDSQ) are disordered. One can recognise a Rab-GAP TBC domain in the interval 243–451 (GIPKEWRKRV…KIWDSVFFEG (209 aa)). Residues 583–645 (QKQIKDQKEE…QQYSRIKKRQ (63 aa)) are a coiled coil. Disordered regions lie at residues 731-781 (AKGE…LDRT), 812-859 (ELSP…SPFP), and 872-907 (NLGL…SKKR). The span at 749–762 (EVPKDQPDTSKETE) shows a compositional bias: basic and acidic residues. The segment covering 831–843 (ESQSDSHSSSSES) has biased composition (low complexity). Over residues 892 to 907 (KTFNKAANGTTGSKKR) the composition is skewed to polar residues.

May act as a GTPase-activating protein for Rab family protein(s). In Xenopus tropicalis (Western clawed frog), this protein is TBC1 domain family member 30 (tbc1d30).